We begin with the raw amino-acid sequence, 673 residues long: MNRKDIKRKSHQECSGKAGGRGRSRQARRHKTCPTPREISKVMASMNLGVLSESSCSEDELLEECIRCFDSAGSLRRGDHILKMVLTMHSWVLPSSELAARLLTSYQKAAKDAQELRQLQICYLVRYWLTHHHEAVHQEPQLEAVISRFWTTVAQEGNMAQRSLGDASSLLSPGGPGPPPPMSSPGLGKKRKVSLLFDHLETEELAQHLTYLEFRSFQAITPQDLRGYVLQGSVRGCPALEGSVGLSNSVSRWVQVMVLSRPGPAQRAQVLDKFIRVAQRLHQLQNFNTLMAVTGGLCHSAISRLKDSHVHLSPDSTKALLELTELLSSHNNYAHYRRTWAGCTGFRLPVLGVHLKDLVSLYEAHPDRLPDGRLHLPKLNSLYLRLQELMALQGQHPPCSANEDLLHLLTLSLDLFYTEDEIYELSYAREPRCPKSLPPSPFKAPVVVEWAQGVTPKPDSVTLGQHVEQLVESVFKNYDPEGRGSISLEDFERLSGNFPFACHGLHPPPRHGSGSFSREELTKYLLHASAICSKLGLAFLHAFQEVTFRKPTFCHSCSGFLWGVTKQGYRCRDCGLCCHRHCRDQVRVECKKRPETKGDPGPPGAPVPATSLPPANCGSEESLSYTLSPDPESGCHLRHAWTQTESSHSSWEPEVVPCPARVLPSRASSKPSV.

Composition is skewed to basic residues over residues 1–10 and 20–32; these read MNRKDIKRKS and GRGRSRQARRHKT. Disordered stretches follow at residues 1–34 and 164–188; these read MNRKDIKRKSHQECSGKAGGRGRSRQARRHKTCP and LGDASSLLSPGGPGPPPPMSSPGLG. Residues 49-175 enclose the N-terminal Ras-GEF domain; sequence GVLSESSCSE…DASSLLSPGG (127 aa). Residues 164–173 are compositionally biased toward low complexity; it reads LGDASSLLSP. A Ras-GEF domain is found at 201 to 432; sequence ETEELAQHLT…YELSYAREPR (232 aa). One can recognise an EF-hand domain in the interval 466 to 501; the sequence is HVEQLVESVFKNYDPEGRGSISLEDFERLSGNFPFA. A Phorbol-ester/DAG-type zinc finger spans residues 540 to 590; it reads LHAFQEVTFRKPTFCHSCSGFLWGVTKQGYRCRDCGLCCHRHCRDQVRVEC. The tract at residues 592–633 is disordered; the sequence is KRPETKGDPGPPGAPVPATSLPPANCGSEESLSYTLSPDPES.

It belongs to the RASGRP family. Expressed by mast cells and their progenitors (at protein level). Expressed by dendritic cells. In terms of tissue distribution, expressed in neutrophils.

It is found in the cytoplasm. Its subcellular location is the cell membrane. In terms of biological role, functions as a cation- and diacylglycerol (DAG)-regulated nucleotide exchange factor activating Ras through the exchange of bound GDP for GTP. In neutrophils, participates in a phospholipase C-activating N-formyl peptide-activated GPCR (G protein-coupled receptor) signaling pathway by promoting Ras-mediated activation of PIK3CG/PI3Kgamma to promote neutrophil functional responses. In CD117(+) dendritic cells and mast cells, participates in an lipopolysaccharide (LPS)-activated signaling pathway that stimulates the production of interferon-gamma and other pro-inflammatory cytokines by natural killer (NK) cells. May function in mast cell differentiation. Does not appear to be required for the development of B-cells, DC-cells, T-cells, or NK-cells. Its function is as follows. Binds diacylglycerol (DAG). Unable to bind diacylglycerol (DAG). This chain is RAS guanyl-releasing protein 4 (Rasgrp4), found in Mus musculus (Mouse).